Consider the following 613-residue polypeptide: 4-hydroxy-3-methylbut-2-en-1-yl diphosphate synthase (flavodoxin) (613 aa).

[4Fe-4S] cluster contacts are provided by C521, C524, C555, and E562.

This sequence belongs to the IspG family. [4Fe-4S] cluster serves as cofactor.

It carries out the reaction (2E)-4-hydroxy-3-methylbut-2-enyl diphosphate + oxidized [flavodoxin] + H2O + 2 H(+) = 2-C-methyl-D-erythritol 2,4-cyclic diphosphate + reduced [flavodoxin]. It functions in the pathway isoprenoid biosynthesis; isopentenyl diphosphate biosynthesis via DXP pathway; isopentenyl diphosphate from 1-deoxy-D-xylulose 5-phosphate: step 5/6. Its function is as follows. Converts 2C-methyl-D-erythritol 2,4-cyclodiphosphate (ME-2,4cPP) into 1-hydroxy-2-methyl-2-(E)-butenyl 4-diphosphate. The chain is 4-hydroxy-3-methylbut-2-en-1-yl diphosphate synthase (flavodoxin) from Bacteroides thetaiotaomicron (strain ATCC 29148 / DSM 2079 / JCM 5827 / CCUG 10774 / NCTC 10582 / VPI-5482 / E50).